We begin with the raw amino-acid sequence, 250 residues long: Probable E3 ubiquitin-protein ligase RHY1A (250 aa).

The segment covering 1-10 has biased composition (polar residues); sequence MTSASELFST. A disordered region spans residues 1 to 106; sequence MTSASELFST…ETQSSSFVNL (106 aa). Positions 29 to 47 are enriched in basic residues; it reads YRHHSHHHHRRHGVHHHNQ. Residues 48 to 58 show a composition bias toward basic and acidic residues; the sequence is RHDSDGCDPLR. Residues 60 to 69 show a composition bias toward basic residues; that stretch reads PTPRLRRFFH. Basic and acidic residues predominate over residues 71-80; sequence PIQERSRPIR. The segment covering 91–102 has biased composition (low complexity); that stretch reads TDSTDTETQSSS. The segment at 203–244 adopts an RING-type; atypical zinc-finger fold; sequence CSICLESFTKGDMLISLPCTHSFHSSCLNPWLRACGDCPCCR.

It catalyses the reaction S-ubiquitinyl-[E2 ubiquitin-conjugating enzyme]-L-cysteine + [acceptor protein]-L-lysine = [E2 ubiquitin-conjugating enzyme]-L-cysteine + N(6)-ubiquitinyl-[acceptor protein]-L-lysine.. It functions in the pathway protein modification; protein ubiquitination. Its function is as follows. Probable E3 ubiquitin-protein ligase that may possess E3 ubiquitin ligase activity in vitro. This Arabidopsis thaliana (Mouse-ear cress) protein is Probable E3 ubiquitin-protein ligase RHY1A.